Reading from the N-terminus, the 399-residue chain is Phosphatidate cytidylyltransferase 5, chloroplastic (399 aa).

The transit peptide at 1 to 26 directs the protein to the chloroplast; that stretch reads MAPFVEVCRYKPLPLSLSSLCTCPCR. 6 helical membrane passes run 123 to 143, 187 to 207, 217 to 237, 266 to 286, 309 to 329, and 333 to 353; these read VGGIVLAGGWVFTVAVAAAVL, FGHIDISITSAAFVVAMALLL, LSSTMFGLFYCGYLPCFWVKL, VGLVAILISFCGIIASDTFAF, AFAGLVGCISITILLSKSLSW, and LVSTIAFGVLNFFGSVFGDLT.

The protein belongs to the CDS family. Mg(2+) is required as a cofactor.

It localises to the plastid. The protein resides in the chloroplast membrane. It catalyses the reaction a 1,2-diacyl-sn-glycero-3-phosphate + CTP + H(+) = a CDP-1,2-diacyl-sn-glycerol + diphosphate. It participates in phospholipid metabolism; CDP-diacylglycerol biosynthesis; CDP-diacylglycerol from sn-glycerol 3-phosphate: step 3/3. With respect to regulation, highest activities is obtained at about 30 mM CTP and 2 mM phosphatidic acid (PA). In terms of biological role, may be involved in the synthesis of minor phospholipids and in modulation of IP3-mediated signal transduction. Promotes the biosynthesis of plastidial phosphatidylglycerol (PG) which is required for structure and function of thylakoid membranes and, hence, for photoautotrophic growth. The protein is Phosphatidate cytidylyltransferase 5, chloroplastic of Arabidopsis thaliana (Mouse-ear cress).